The sequence spans 63 residues: ATP synthase subunit epsilon, mitochondrial (63 aa).

As to quaternary structure, F-type ATP synthases have 2 components, the catalytic core F(1) and the membrane-embedded component F(0), linked together by a central stalk and a peripheral stalk. The central stalk, also called rotor shaft, is often seen as part of F(1). The peripheral stalk is seen as part of F(0). F(0) contains the membrane channel next to the rotor. F-type ATP synthases form dimers but each monomer functions independently in ATP generation. The dimer consists of 18 different polypeptides: ATP1 (subunit alpha, part of F(1), 3 molecules per monomer), ATP2 (subunit beta, part of F(1), 3 molecules per monomer), ATP3 (subunit gamma, part of the central stalk), ATP4 (subunit b, part of the peripheral stalk), ATP5/OSCP (subunit 5/OSCP, part of the peripheral stalk), ATP6 (subunit a, part of the peripheral stalk), ATP7 (subunit d, part of the peripheral stalk), ATP8 (subunit 8, part of the peripheral stalk), OLI1 (subunit c, part of the rotor, 10 molecules per monomer), ATP14 (subunit h, part of the peripheral stalk), ATP15 (subunit epsilon, part of the central stalk), ATP16 (subunit delta, part of the central stalk), ATP17 (subunit f, part of the peripheral stalk), ATP18 (subunit i/j, part of the peripheral stalk). Dimer-specific subunits are ATP19 (subunit k, at interface between monomers), ATP20 (subunit g, at interface between monomers), TIM11 (subunit e, at interface between monomers). Also contains subunit L.

It localises to the mitochondrion inner membrane. In terms of biological role, mitochondrial membrane ATP synthase (F(1)F(0) ATP synthase or Complex V) produces ATP from ADP in the presence of a proton gradient across the membrane which is generated by electron transport complexes of the respiratory chain. F-type ATP synthases consist of two structural domains, F(1) - containing the extramembraneous catalytic core, and F(0) - containing the membrane proton channel, linked together by a central stalk and a peripheral stalk. During catalysis, ATP synthesis in the catalytic domain of F(1) is coupled via a rotary mechanism of the central stalk subunits to proton translocation. Part of the complex F(1) domain and the central stalk which is part of the complex rotary element. Rotation of the central stalk against the surrounding alpha/ATP1(3)beta/ATP2(3) subunits leads to hydrolysis of ATP in three separate catalytic sites on the beta/ATP2 subunits. This chain is ATP synthase subunit epsilon, mitochondrial, found in Pichia angusta (Yeast).